The sequence spans 302 residues: Probable lipid kinase YegS-like (302 aa).

In terms of domain architecture, DAGKc spans 1 to 129; it reads MDKDKVLLVL…IDLGEVNGKL (129 aa). ATP contacts are provided by residues T39, 65–71, and T92; that span reads GDGTLRE. Mg(2+)-binding residues include R210, D213, and L215. E268 serves as the catalytic Proton acceptor.

Belongs to the diacylglycerol/lipid kinase family. YegS lipid kinase subfamily. Mg(2+) is required as a cofactor. Requires Ca(2+) as cofactor.

It localises to the cytoplasm. Probably phosphorylates lipids; the in vivo substrate is unknown. This Pseudomonas aeruginosa (strain ATCC 15692 / DSM 22644 / CIP 104116 / JCM 14847 / LMG 12228 / 1C / PRS 101 / PAO1) protein is Probable lipid kinase YegS-like.